A 190-amino-acid polypeptide reads, in one-letter code: Potassium-transporting ATPase KdpC subunit (190 aa).

The chain crosses the membrane as a helical span at residues 13-33 (VGFLLLTLMCGVVYPGIVTIF).

Belongs to the KdpC family. The system is composed of three essential subunits: KdpA, KdpB and KdpC.

It localises to the cell membrane. Functionally, part of the high-affinity ATP-driven potassium transport (or Kdp) system, which catalyzes the hydrolysis of ATP coupled with the electrogenic transport of potassium into the cytoplasm. This subunit acts as a catalytic chaperone that increases the ATP-binding affinity of the ATP-hydrolyzing subunit KdpB by the formation of a transient KdpB/KdpC/ATP ternary complex. This chain is Potassium-transporting ATPase KdpC subunit, found in Listeria monocytogenes serotype 4a (strain HCC23).